A 469-amino-acid chain; its full sequence is Probable monogalactosyldiacylglycerol synthase 2, chloroplastic (469 aa).

The N-terminal 42 residues, 1–42 (MVISVATPRRSIRDAVLGGVLGAGGRQLYQPLRCAFYDGAAG), are a transit peptide targeting the chloroplast.

Belongs to the glycosyltransferase 28 family.

It localises to the plastid. Its subcellular location is the chloroplast membrane. The enzyme catalyses a 1,2-diacyl-sn-glycerol + UDP-alpha-D-galactose = a 1,2-diacyl-3-O-(beta-D-galactosyl)-sn-glycerol + UDP + H(+). In terms of biological role, involved in the synthesis of the major structural component of photosynthetic membranes. The sequence is that of Probable monogalactosyldiacylglycerol synthase 2, chloroplastic (MGD2) from Oryza sativa subsp. indica (Rice).